The chain runs to 1893 residues: CDK5 regulatory subunit-associated protein 2 (1893 aa).

The CM1 motif; interacts with the gTuRC stretch occupies residues 51–94; that stretch reads TVSPTRARNMKDFENQITELKKENFNLKLRIYFLEERMQQEFHG. Residues 58-196 form an interaction with NCKAP5L region; it reads RNMKDFENQI…TEKALRLRLE (139 aa). At Ser547 the chain carries Phosphoserine. Positions 926-1208 are interaction with MAPRE1; that stretch reads PGVTNREAKK…LENLKQQLEE (283 aa). Residue Thr1001 is modified to Phosphothreonine. Residues 1015 to 1071 are disordered; sequence AAYQDSPGEQKGIKTTSSVWRDKEMDSDQQTSYEIDSEICPPDDLASLPSCKENPED. The interaction with PCNT and AKAP9 stretch occupies residues 1196 to 1893; it reads SRVLENLKQQ…GTCSPSRPGS (698 aa). Phosphoserine is present on Ser1238. Disordered stretches follow at residues 1347 to 1381 and 1467 to 1486; these read LPESPEPSASHALSDYETSEKSFFSQDQKQDNETE and IKGSRDKQKENDKLRESLSR. Over residues 1469 to 1486 the composition is skewed to basic and acidic residues; it reads GSRDKQKENDKLRESLSR. Ser1490 carries the phosphoserine modification. Over residues 1500-1519 the composition is skewed to basic and acidic residues; the sequence is SVKEENERLQKEGSEKERHN. The disordered stretch occupies residues 1500 to 1521; sequence SVKEENERLQKEGSEKERHNQQ. Ser1663 and Ser1666 each carry phosphoserine. 2 disordered regions span residues 1675-1706 and 1752-1774; these read AVTPKSVSETPPLSGNDTDSLSCDSGSSATST and DVQTQEAPSSTSQELGTKGPHPA. The tract at residues 1726–1768 is interaction with CDK5R1; sequence HVLGLIEDYEALLKQISQGQRLLAEMDVQTQEAPSSTSQELGT. Over residues 1753–1766 the composition is skewed to polar residues; the sequence is VQTQEAPSSTSQEL. Residues 1861–1870 are required for centrosomal attachment, Golgi localization and CALM1 interaction; sequence VVTHKILRKA. The segment at 1874-1893 is disordered; that stretch reads LELRPGGSHPGTCSPSRPGS. Positions 1884–1893 are enriched in polar residues; sequence GTCSPSRPGS. Position 1893 is a phosphoserine (Ser1893).

In terms of assembly, homodimer. Interacts with CDK5R1 (p35 form). CDK5RAP1, CDK5RAP2 and CDK5RAP3 show competitive binding to CDK5R1. May form a complex with CDK5R1 and CDK5. Interacts with pericentrin/PCNT; the interaction is leading to centrosomal and Golgi localization of CDK5RAP2 and PCNT. Interacts with AKAP9; the interaction targets CDK5RAP2 and AKAP9 to Golgi apparatus. Interacts with MAPRE1; the interaction is direct and targets CDK5RAP2 and EB1/MAPRE1 to microtubule plus ends. Interacts with TUBG1; the interaction is leading to the centrosomal localization of CDK5RAP2 and TUBG1. Interacts with TUBGCP3. Interacts with CALM1. Interacts with CDC20. Interacts with CEP68; degradation of CEP68 in early mitosis leads to removal of CDK5RAP2 from the centrosome which promotes centriole disengagement and subsequent centriole separation. Interacts with NCKAP5L. Forms a pericentrosomal complex with AKAP9, MAPRE1 and PDE4DIP isoform 13/MMG8/SMYLE; within this complex, MAPRE1 binding to CDK5RAP2 may be mediated by PDE4DIP. Interacts with LGALS3BP; this interaction may connect the pericentrosomal complex to the gamma-tubulin ring complex (gTuRC) to promote microtubule assembly and acetylation. Interacts with CCDC66. Associates (via CM1 motif) with TUBGCP2 of the gTuRC; the interaction plays a role in gTuRC activation. Phosphorylated in vitro by CDK5.

It localises to the cytoplasm. It is found in the cytoskeleton. Its subcellular location is the microtubule organizing center. The protein resides in the centrosome. The protein localises to the golgi apparatus. Functionally, potential regulator of CDK5 activity via its interaction with CDK5R1. Negative regulator of centriole disengagement (licensing) which maintains centriole engagement and cohesion. Involved in regulation of mitotic spindle orientation. Plays a role in the spindle checkpoint activation by acting as a transcriptional regulator of both BUBR1 and MAD2 promoter. Together with EB1/MAPRE1, may promote microtubule polymerization, bundle formation, growth and dynamics at the plus ends. Regulates centrosomal maturation by recruitment of the gamma-tubulin ring complex (gTuRC) onto centrosomes. In complex with PDE4DIP isoform 13/MMG8/SMYLE, MAPRE1 and AKAP9, contributes to microtubules nucleation and extension from the centrosome to the cell periphery. Required for the recruitment of AKAP9 to centrosomes. Plays a role in neurogenesis. The chain is CDK5 regulatory subunit-associated protein 2 (CDK5RAP2) from Pan troglodytes (Chimpanzee).